Consider the following 267-residue polypeptide: 4-hydroxy-tetrahydrodipicolinate reductase (267 aa).

Residues 9–14 (GASGRM) and Asp35 contribute to the NAD(+) site. Arg36 contacts NADP(+). NAD(+) is bound by residues 98 to 100 (GTT) and 122 to 125 (ASNF). His155 acts as the Proton donor/acceptor in catalysis. His156 is a (S)-2,3,4,5-tetrahydrodipicolinate binding site. Residue Lys159 is the Proton donor of the active site. A (S)-2,3,4,5-tetrahydrodipicolinate-binding site is contributed by 165-166 (GT).

This sequence belongs to the DapB family.

The protein localises to the cytoplasm. It catalyses the reaction (S)-2,3,4,5-tetrahydrodipicolinate + NAD(+) + H2O = (2S,4S)-4-hydroxy-2,3,4,5-tetrahydrodipicolinate + NADH + H(+). The catalysed reaction is (S)-2,3,4,5-tetrahydrodipicolinate + NADP(+) + H2O = (2S,4S)-4-hydroxy-2,3,4,5-tetrahydrodipicolinate + NADPH + H(+). Its pathway is amino-acid biosynthesis; L-lysine biosynthesis via DAP pathway; (S)-tetrahydrodipicolinate from L-aspartate: step 4/4. Functionally, catalyzes the conversion of 4-hydroxy-tetrahydrodipicolinate (HTPA) to tetrahydrodipicolinate. This Chromobacterium violaceum (strain ATCC 12472 / DSM 30191 / JCM 1249 / CCUG 213 / NBRC 12614 / NCIMB 9131 / NCTC 9757 / MK) protein is 4-hydroxy-tetrahydrodipicolinate reductase.